A 561-amino-acid chain; its full sequence is DNA ligase (561 aa).

Position 249 (Glu249) interacts with ATP. Lys251 acts as the N6-AMP-lysine intermediate in catalysis. ATP is bound by residues Arg256, Arg271, Glu301, Phe340, Arg417, and Lys423.

It belongs to the ATP-dependent DNA ligase family. Mg(2+) serves as cofactor.

The catalysed reaction is ATP + (deoxyribonucleotide)n-3'-hydroxyl + 5'-phospho-(deoxyribonucleotide)m = (deoxyribonucleotide)n+m + AMP + diphosphate.. DNA ligase that seals nicks in double-stranded DNA during DNA replication, DNA recombination and DNA repair. This is DNA ligase from Methanothermobacter thermautotrophicus (strain ATCC 29096 / DSM 1053 / JCM 10044 / NBRC 100330 / Delta H) (Methanobacterium thermoautotrophicum).